A 166-amino-acid polypeptide reads, in one-letter code: MEASGEKAAVVRRLMEAKEVSGKTFSGIAAETGLTNVYVAQLLRRQAQLKADTVPALRAALPTLTDDLIELMMQPPFRSYHPNIVHEPAIYRLNEAVMHFGESIKEIINEEFGDGIMSAIDFYCSVDKVEGADGKDRVVVTFDGKYLPYTEQKSEHMMSRPTRKTS.

Residues Arg92, Glu95, and Ser118 contribute to the active site.

It belongs to the cyanase family.

It catalyses the reaction cyanate + hydrogencarbonate + 3 H(+) = NH4(+) + 2 CO2. In terms of biological role, catalyzes the reaction of cyanate with bicarbonate to produce ammonia and carbon dioxide. This chain is Cyanate hydratase, found in Zea mays (Maize).